Reading from the N-terminus, the 488-residue chain is Replication-associated protein (488 aa).

The disordered stretch occupies residues 462–488 (PRPRQMQRSATEHNLFQYARSGRDPTS).

It localises to the host nucleus. In terms of biological role, plays an essential for the replication of viral DNA. Presumably cleaves viral genomic dsRNA replicative form to initiate rolling circle replication. This Chaetoceros diatodnavirus 1 (Chaetoceros setoense DNA virus) protein is Replication-associated protein.